The following is a 702-amino-acid chain: Elongation factor G (702 aa).

The region spanning Glu-8–Val-290 is the tr-type G domain. Residues Ala-17–Thr-24, Asp-88–His-92, and Asn-142–Asp-145 contribute to the GTP site.

Belongs to the TRAFAC class translation factor GTPase superfamily. Classic translation factor GTPase family. EF-G/EF-2 subfamily.

It localises to the cytoplasm. Functionally, catalyzes the GTP-dependent ribosomal translocation step during translation elongation. During this step, the ribosome changes from the pre-translocational (PRE) to the post-translocational (POST) state as the newly formed A-site-bound peptidyl-tRNA and P-site-bound deacylated tRNA move to the P and E sites, respectively. Catalyzes the coordinated movement of the two tRNA molecules, the mRNA and conformational changes in the ribosome. The chain is Elongation factor G from Acidovorax sp. (strain JS42).